We begin with the raw amino-acid sequence, 407 residues long: E3 ubiquitin-protein ligase TRIM13 (407 aa).

An RING-type zinc finger spans residues 10 to 58; it reads CPICCSLFDDPRVLPCSHNFCKKCLEGILEGSVRNSLWRPAPFKCPTCR. Residues 89–131 form a B box-type zinc finger; sequence PKMPVCKGHLGQPLNIFCLTDMQLICGICATRGEHTKHVFCSI. Zn(2+) contacts are provided by Cys-94, His-97, Cys-117, and His-123. The stretch at 172–200 forms a coiled coil; that stretch reads LQLLTKDSDKVKEFFEKLQHTLDQKKNEI. The helical transmembrane segment at 317–337 threads the bilayer; it reads LFLLILLLGLVIVFGPTMFLE.

It belongs to the TRIM/RBCC family. In terms of assembly, interacts (via C-terminal domain) with VCP. Interacts with AKT1; the interaction ubiquitinates AKT1 and leads to its proteasomal degradation. Interacts with MDM2; the interaction ubiquitinates AKT1 and leads to its proteasomal degradation. Interacts with p62/SQSTM1. Interacts with TRAF6. Interacts with IKBKG/NEMO. Post-translationally, auto-ubiquitinated; requires the RING-type zinc finger. Auto-polyubiquitination leads to proteasomal degradation.

It is found in the endoplasmic reticulum membrane. It catalyses the reaction S-ubiquitinyl-[E2 ubiquitin-conjugating enzyme]-L-cysteine + [acceptor protein]-L-lysine = [E2 ubiquitin-conjugating enzyme]-L-cysteine + N(6)-ubiquitinyl-[acceptor protein]-L-lysine.. It functions in the pathway protein modification; protein ubiquitination. Its function is as follows. Endoplasmic reticulum (ER) membrane anchored E3 ligase involved in the retrotranslocation and turnover of membrane and secretory proteins from the ER through a set of processes named ER-associated degradation (ERAD). This process acts on misfolded proteins as well as in the regulated degradation of correctly folded proteins. Enhances ionizing radiation-induced p53/TP53 stability and apoptosis via ubiquitinating MDM2 and AKT1 and decreasing AKT1 kinase activity through MDM2 and AKT1 proteasomal degradation. Regulates ER stress-induced autophagy, and may act as a tumor suppressor. Also plays a role in innate immune response by stimulating NF-kappa-B activity in the TLR2 signaling pathway. Ubiquitinates TRAF6 via the 'Lys-29'-linked polyubiquitination chain resulting in NF-kappa-B activation. Participates as well in T-cell receptor-mediated NF-kappa-B activation. In the presence of TNF, modulates the IKK complex by regulating IKBKG/NEMO ubiquitination leading to the repression of NF-kappa-B. The protein is E3 ubiquitin-protein ligase TRIM13 (TRIM13) of Homo sapiens (Human).